We begin with the raw amino-acid sequence, 307 residues long: Oxygen-dependent coproporphyrinogen-III oxidase (307 aa).

Ser99 serves as a coordination point for substrate. A divalent metal cation-binding residues include His103 and His113. The Proton donor role is filled by His113. A substrate-binding site is contributed by 115–117 (NVR). Positions 152 and 182 each coordinate a divalent metal cation. The interval 247 to 282 (YVEFNLVFDRGTLFGLQSGGRTESILMSMPPVANWR) is important for dimerization. 265–267 (GGR) is a binding site for substrate.

Belongs to the aerobic coproporphyrinogen-III oxidase family. As to quaternary structure, homodimer. Requires a divalent metal cation as cofactor.

Its subcellular location is the cytoplasm. The catalysed reaction is coproporphyrinogen III + O2 + 2 H(+) = protoporphyrinogen IX + 2 CO2 + 2 H2O. It functions in the pathway porphyrin-containing compound metabolism; protoporphyrin-IX biosynthesis; protoporphyrinogen-IX from coproporphyrinogen-III (O2 route): step 1/1. In terms of biological role, involved in the heme biosynthesis. Catalyzes the aerobic oxidative decarboxylation of propionate groups of rings A and B of coproporphyrinogen-III to yield the vinyl groups in protoporphyrinogen-IX. The chain is Oxygen-dependent coproporphyrinogen-III oxidase from Burkholderia orbicola (strain MC0-3).